Reading from the N-terminus, the 379-residue chain is ATP phosphoribosyltransferase regulatory subunit (379 aa).

It belongs to the class-II aminoacyl-tRNA synthetase family. HisZ subfamily. As to quaternary structure, heteromultimer composed of HisG and HisZ subunits.

It localises to the cytoplasm. The protein operates within amino-acid biosynthesis; L-histidine biosynthesis; L-histidine from 5-phospho-alpha-D-ribose 1-diphosphate: step 1/9. Its function is as follows. Required for the first step of histidine biosynthesis. May allow the feedback regulation of ATP phosphoribosyltransferase activity by histidine. The sequence is that of ATP phosphoribosyltransferase regulatory subunit from Sinorhizobium fredii (strain NBRC 101917 / NGR234).